The primary structure comprises 254 residues: MAYSIKLDSFEGPLDLLLHLIDKAEVDIYDIPVAEITEQYLATIDKMQELQLDVASEFVVMAATLLSIKSKMLLPKKEEHVFQQFLDMDVDEIDPREELVARLLEYKRYKMLAENLREMEIGRNQVFTRPAENLSPYVREEDHTVTNVTLYDLINALEKLVKKTKEKEPMTTVSRDEISIKDRMTEIRQAVRSGGMVRFSELFTQGATRTEIVTTFLALLELMKAKHITCVQNQLFQDIIICENGTEGAHTDGL.

It belongs to the ScpA family. As to quaternary structure, component of a cohesin-like complex composed of ScpA, ScpB and the Smc homodimer, in which ScpA and ScpB bind to the head domain of Smc. The presence of the three proteins is required for the association of the complex with DNA.

The protein resides in the cytoplasm. In terms of biological role, participates in chromosomal partition during cell division. May act via the formation of a condensin-like complex containing Smc and ScpB that pull DNA away from mid-cell into both cell halves. This chain is Segregation and condensation protein A, found in Brevibacillus brevis (strain 47 / JCM 6285 / NBRC 100599).